A 593-amino-acid polypeptide reads, in one-letter code: Progranulin (593 aa).

The first 17 residues, 1 to 17 (MWTLVSWVALTAGLVAG), serve as a signal peptide directing secretion. N-linked (GlcNAc...) asparagine glycosylation occurs at asparagine 118. Intrachain disulfides connect cysteine 126/cysteine 139 and cysteine 133/cysteine 149. Asparagine 236 and asparagine 265 each carry an N-linked (GlcNAc...) asparagine glycan. Disulfide bonds link cysteine 284/cysteine 296, cysteine 290/cysteine 306, cysteine 297/cysteine 314, cysteine 307/cysteine 321, cysteine 315/cysteine 328, cysteine 322/cysteine 335, cysteine 366/cysteine 378, cysteine 372/cysteine 388, cysteine 397/cysteine 410, and cysteine 404/cysteine 416. N-linked (GlcNAc...) asparagine glycosylation is present at asparagine 368. Asparagine 530 carries N-linked (GlcNAc...) asparagine glycosylation.

Belongs to the granulin family. In terms of assembly, progranulin is secreted as a homodimer. Interacts with SLPI; interaction protects progranulin from proteolysis. Interacts (via region corresponding to granulin-7 peptide) with CTSD; stabilizes CTSD and increases its proteolytic activity. Interacts (via region corresponding to granulin-7 peptide) with SORT1; this interaction mediates endocytosis and lysosome delivery of progranulin; interaction occurs at the neuronal cell surface in a stressed nervous system. Interacts with PSAP; facilitates lysosomal delivery of progranulin from the extracellular space and the biosynthetic pathway. Forms a complex with PSAP and M6PR; PSAP bridges the binding between progranulin and M6PR. Forms a complex with PSAP and SORT1; progranulin bridges the interaction between PSAP and SORT1; facilitates lysosomal targeting of PSAP via SORT1; interaction enhances PSAP uptake in primary cortical neurons. Interacts (via regions corresponding to granulin-2 and granulin-7 peptides) with GBA1; this interaction prevents aggregation of GBA1-SCARB2 complex via interaction with HSPA1A upon stress. Interacts (via region corresponding to granulin-7 peptide) with HSPA1A; mediates recruitment of HSPA1A to GBA1 and prevents GBA1 aggregation in response to stress. In terms of processing, cleaved by ELANE; proteolysis is blocked by SLPI and is concentration- and time-dependent and induces CXCL8/IL-8 production; granulin-3 and granulin-4 are resistant to ELANE. Cleaved by CTSL in lysosome thus regulating the maturation and turnover of progranulin within the lysosome. In terms of tissue distribution, in myelogenous leukemic cell lines of promonocytic, promyelocytic, and proerythroid lineage, in fibroblasts, and very strongly in epithelial cell lines. Present in inflammatory cells and bone marrow. Highest levels in kidney.

Its subcellular location is the secreted. It localises to the lysosome. In terms of biological role, secreted protein that acts as a key regulator of lysosomal function and as a growth factor involved in inflammation, wound healing and cell proliferation. Regulates protein trafficking to lysosomes, and also the activity of lysosomal enzymes. Also facilitates the acidification of lysosomes, causing degradation of mature CTSD by CTSB. In addition, functions as a wound-related growth factor that acts directly on dermal fibroblasts and endothelial cells to promote division, migration and the formation of capillary-like tubule structures. Also promotes epithelial cell proliferation by blocking TNF-mediated neutrophil activation preventing release of oxidants and proteases. Moreover, modulates inflammation in neurons by preserving neurons survival, axonal outgrowth and neuronal integrity. Its function is as follows. Promotes proliferation of the epithelial cell line A431 in culture. Inhibits epithelial cell proliferation and induces epithelial cells to secrete IL-8. Functionally, stabilizes CTSD through interaction with CTSD leading to maintain its aspartic-type peptidase activity. In Homo sapiens (Human), this protein is Progranulin.